Reading from the N-terminus, the 245-residue chain is Eukaryotic translation initiation factor 6 (245 aa).

A Phosphotyrosine modification is found at Tyr-113. Residue Thr-165 is modified to Phosphothreonine. Ser-166 carries the phosphoserine modification. Ser-174 and Ser-175 each carry phosphoserine; by CK1. Ser-235 carries the phosphoserine; by PKC modification. Phosphoserine is present on residues Ser-239 and Ser-243.

The protein belongs to the eIF-6 family. Monomer. Associates with the 60S ribosomal subunit. Interacts with RACK1. Interacts with DICER1, AGO2, TARBP2, MOV10 and RPL7A; they form a large RNA-induced silencing complex (RISC). Post-translationally, phosphorylation at Ser-174 and Ser-175 by CSNK1D/CK1 promotes nuclear export. Ufmylated by UFL1. As to expression, expressed at very high levels in colon carcinoma with lower levels in normal colon and ileum and lowest levels in kidney and muscle (at protein level).

The protein localises to the cytoplasm. The protein resides in the nucleus. Its subcellular location is the nucleolus. Functionally, binds to the 60S ribosomal subunit and prevents its association with the 40S ribosomal subunit to form the 80S initiation complex in the cytoplasm. Behaves as a stimulatory translation initiation factor downstream insulin/growth factors. Is also involved in ribosome biogenesis. Associates with pre-60S subunits in the nucleus and is involved in its nuclear export. Cytoplasmic release of TIF6 from 60S subunits and nuclear relocalization is promoted by a RACK1 (RACK1)-dependent protein kinase C activity. In tissues responsive to insulin, controls fatty acid synthesis and glycolysis by exerting translational control of adipogenic transcription factors such as CEBPB, CEBPD and ATF4 that have G/C rich or uORF in their 5'UTR. Required for ROS-dependent megakaryocyte maturation and platelets formation, controls the expression of mitochondrial respiratory chain genes involved in reactive oxygen species (ROS) synthesis. Involved in miRNA-mediated gene silencing by the RNA-induced silencing complex (RISC). Required for both miRNA-mediated translational repression and miRNA-mediated cleavage of complementary mRNAs by RISC. Modulates cell cycle progression and global translation of pre-B cells, its activation seems to be rate-limiting in tumorigenesis and tumor growth. This is Eukaryotic translation initiation factor 6 from Homo sapiens (Human).